The following is a 565-amino-acid chain: Phosphomethylpyrimidine synthase (565 aa).

Substrate-binding positions include N201, M230, Y259, H295, 315-317 (SRG), 356-359 (DGLR), and E395. H399 is a Zn(2+) binding site. Y422 lines the substrate pocket. H463 provides a ligand contact to Zn(2+). C543, C546, and C551 together coordinate [4Fe-4S] cluster.

It belongs to the ThiC family. As to quaternary structure, homodimer. [4Fe-4S] cluster serves as cofactor.

It catalyses the reaction 5-amino-1-(5-phospho-beta-D-ribosyl)imidazole + S-adenosyl-L-methionine = 4-amino-2-methyl-5-(phosphooxymethyl)pyrimidine + CO + 5'-deoxyadenosine + formate + L-methionine + 3 H(+). The protein operates within cofactor biosynthesis; thiamine diphosphate biosynthesis. Its function is as follows. Catalyzes the synthesis of the hydroxymethylpyrimidine phosphate (HMP-P) moiety of thiamine from aminoimidazole ribotide (AIR) in a radical S-adenosyl-L-methionine (SAM)-dependent reaction. The polypeptide is Phosphomethylpyrimidine synthase (Ehrlichia canis (strain Jake)).